The sequence spans 483 residues: M protein, serotype 6 (483 aa).

The signal sequence occupies residues 1–42 (MAKNNTNRHYSLRKLKKGTASVAVALSVIGAGLVVNTNEVSA). The stretch at 54-171 (DKARELLNKY…IGTLKKTLDE (118 aa)) forms a coiled coil. 8 repeat units span residues 69 to 75 (MLQANND), 76 to 82 (KLTTENN), 83 to 89 (NLTDQNK), 90 to 96 (NLTTENK), 97 to 103 (NLTDQNK), 104 to 110 (NLTTENK), 111 to 117 (NLTDQNK), and 118 to 124 (NLTTENK). Residues 69 to 138 (MLQANNDKLT…EENRLTTENK (70 aa)) form a 10 X 7 AA approximate tandem repeats of [KMNR]-L-[TQ]-[TDA]-[ENQ]-N-[NDK] region. Positions 74–87 (NDKLTTENNNLTDQ) are enriched in polar residues. Residues 74-157 (NDKLTTENNN…EEEAANKERE (84 aa)) form a disordered region. Over residues 88–113 (NKNLTTENKNLTDQNKNLTTENKNLT) the composition is skewed to low complexity. 2 stretches are compositionally biased toward basic and acidic residues: residues 122-135 (ENKELKAEENRLTT) and 143-157 (KLSEAEEEAANKERE). The 9-1; approximate repeat unit spans residues 125 to 131 (ELKAEEN). 5 tandem repeats follow at residues 132–138 (RLTTENK), 157–181 (ENKEAIGTLKKTLDETVKDKIAKEQ), 182–206 (ESKETIGTLKKTLDETVKDKIAKEQ), 207–231 (ESKETIGTLKKTLDETVKDKIAKEQ), and 232–256 (ESKETIGTLKKILDETVKDKIAREQ). Residues 157–269 (ENKEAIGTLK…QDIGALKQEL (113 aa)) form a 4.5 X 25 AA tandem repeats of E-[NS]-K-E-[TA]-I-G-T-L-K-K-[TI]-L-D-E-T-V-K-D-K-I-A-[KR]-E-Q region. Disordered stretches follow at residues 255-298 (EQKS…EAKK) and 314-345 (VKEEKQISDASRQGLRRDLDASREAKKQVEKA). The 5-2; truncated repeat unit spans residues 257–269 (KSKQDIGALKQEL). Composition is skewed to basic and acidic residues over residues 268 to 298 (ELAKKDEGNKVSEASRKGLRRDLDASREAKK) and 328 to 345 (LRRDLDASREAKKQVEKA). C repeat units lie at residues 270 to 304 (AKKDEGNKVSEASRKGLRRDLDASREAKKQVEKDL) and 312 to 346 (DKVKEEKQISDASRQGLRRDLDASREAKKQVEKAL). A binding to CD46 region spans residues 279–347 (SEASRKGLRR…AKKQVEKALE (69 aa)). Residues 279–347 (SEASRKGLRR…AKKQVEKALE (69 aa)) form a two directly repeated 27 amino acid blocks separated by 15 amino acids region. The stretch at 280–408 (EASRKGLRRD…LAKLRAGKAS (129 aa)) forms a coiled coil. Residues 348-411 (EANSKLAALE…LRAGKASDSQ (64 aa)) are hydrophilic. D repeat units follow at residues 379–384 (AKLEAE), 385–390 (AKALKE), 393–398 (AKQAEE), and 400–405 (AKLRAG). The tract at residues 400–455 (AKLRAGKASDSQTPDAKPGNKVVPGKGQAPQAGTKPNQNKAPMKETKRQLPSTGET) is disordered. The LPXTG sorting signal motif lies at 449–453 (LPSTG). Thr-452 is subject to Pentaglycyl murein peptidoglycan amidated threonine. The propeptide at 453–483 (GETANPFFTAAALTVMATAGVAAVVKRKEEN) is removed by sortase.

The protein belongs to the M protein family.

It localises to the secreted. Its subcellular location is the cell wall. In terms of biological role, mediates the attachment of S.pyogenes to skin epithelial cells through the binding of the human membrane cofactor protein CD46. Also binds to the factor H and factor H-like protein 1. These interactions could contribute to the fact that the M6 protein protects the bacterium from the phagocytosis by regulating the complement activation on the bacterial surface. The sequence is that of M protein, serotype 6 (emm6) from Streptococcus pyogenes.